A 229-amino-acid polypeptide reads, in one-letter code: C-type lectin domain family 1 member B (229 aa).

Topologically, residues 1-33 (MQDEDGYITLNIKTRKPALISVGSASSSWWRVM) are cytoplasmic. The residue at position 7 (tyrosine 7) is a Phosphotyrosine. The short motif at 7–10 (YITL) is the ITAM element. Residues 34 to 54 (ALILLILCVGMVVGLVALGIW) traverse the membrane as a helical; Signal-anchor for type II membrane protein segment. Residues 55–229 (SVMQRNYLQG…AGMTKVDQLP (175 aa)) are Extracellular-facing. Asparagine 68 is a glycosylation site (N-linked (GlcNAc...) asparagine). A disulfide bond links cysteine 102 and cysteine 113. The C-type lectin domain occupies 109–217 (YGDSCYGFFR…CENKHYLMCE (109 aa)). Residues asparagine 120 and asparagine 134 are each glycosylated (N-linked (GlcNAc...) asparagine). 2 disulfide bridges follow: cysteine 130–cysteine 216 and cysteine 195–cysteine 208.

In terms of assembly, homodimer. Interacts (via cytoplasmic domain) with RACK1; promotes CLEC1B ubiquitination and proteasome-mediated degradation. Interacts (dimer) with SYK (via SH2 domains). Interacts with PDPN; the interaction is independent of CLEC1B glycosylation and activates CLEC1B. Glycosylated. In terms of processing, phosphorylated on tyrosine residue in response to rhodocytin binding. As to expression, expressed preferentially in the liver. Also expressed in immune cells of myeloid origin and on the surface of platelets.

It localises to the membrane. In terms of biological role, C-type lectin-like receptor that functions as a platelet receptor for the lymphatic endothelial marker, PDPN. After ligand activation, signals via sequential activation of SRC and SYK tyrosine kinases leading to activation of PLCG2. Functionally, (Microbial infection) Acts as a receptor for the platelet-aggregating snake venom protein rhodocytin. Rhodocytin binding leads to tyrosine phosphorylation and this promotes the binding of spleen tyrosine kinase (SYK) and initiation of downstream tyrosine phosphorylation events and activation of PLCG2. Its function is as follows. (Microbial infection) Acts as an attachment factor for Human immunodeficiency virus type 1 (HIV-1) and facilitates its capture by platelets. In Homo sapiens (Human), this protein is C-type lectin domain family 1 member B (CLEC1B).